The sequence spans 429 residues: Tryptophan synthase beta chain 2 (429 aa).

Positions 18 to 40 (NINPDLPSPLPEPKNPEGGKNIE) are disordered. The residue at position 110 (Lys-110) is an N6-(pyridoxal phosphate)lysine.

It belongs to the TrpB family. Tetramer of two alpha and two beta chains. The cofactor is pyridoxal 5'-phosphate.

The enzyme catalyses (1S,2R)-1-C-(indol-3-yl)glycerol 3-phosphate + L-serine = D-glyceraldehyde 3-phosphate + L-tryptophan + H2O. It participates in amino-acid biosynthesis; L-tryptophan biosynthesis; L-tryptophan from chorismate: step 5/5. The beta subunit is responsible for the synthesis of L-tryptophan from indole and L-serine. In Methanothermobacter thermautotrophicus (strain ATCC 29096 / DSM 1053 / JCM 10044 / NBRC 100330 / Delta H) (Methanobacterium thermoautotrophicum), this protein is Tryptophan synthase beta chain 2 (trpB2).